We begin with the raw amino-acid sequence, 2419 residues long: Telomere-associated protein RIF1 (2419 aa).

Disordered stretches follow at residues 1-24 (MTAP…VPPG) and 373-408 (SIPS…SPRG). Residues 373–385 (SIPSPQGNSSRGS) are compositionally biased toward polar residues. Residues Ser385, Ser391, Ser779, Ser976, and Ser1005 each carry the phosphoserine modification. The residue at position 1044 (Thr1044) is a Phosphothreonine. Positions 1184–1198 (SSSTETSVVSSSSVS) are enriched in low complexity. Disordered stretches follow at residues 1184–1594 (SSST…QAVP) and 1613–1637 (RVIL…EKSK). Composition is skewed to polar residues over residues 1199–1217 (NATF…QTFI) and 1228–1255 (RPFS…TNTD). Thr1215 is subject to Phosphothreonine. Phosphoserine occurs at positions 1231 and 1233. The segment covering 1263-1272 (REVTNSKSDS) has biased composition (basic and acidic residues). Polar residues predominate over residues 1289 to 1302 (AEQSVTKKSKPSLT). The segment covering 1323-1345 (HVSENDDHPSEATLEHKDGDPKP) has biased composition (basic and acidic residues). A phosphoserine mark is found at Ser1407, Ser1439, Ser1457, and Ser1498. Positions 1416 to 1455 (SQERESGQQKKERRKEEEKIISKSPLRIKDDKLPTQKLTD) are enriched in basic and acidic residues. The span at 1457–1467 (SPIQENLTEKG) shows a compositional bias: polar residues. Thr1504 carries the post-translational modification Phosphothreonine. The span at 1507 to 1516 (NLDKSSEKPL) shows a compositional bias: basic and acidic residues. Polar residues predominate over residues 1525-1537 (RRASQGLISAVEN). A phosphoserine mark is found at Ser1528, Ser1538, Ser1540, Ser1542, and Ser1550. Residues 1551 to 1560 (RKKRSGKWKN) are compositionally biased toward basic residues. Residues Ser1562 and Ser1565 each carry the phosphoserine modification. Over residues 1572–1581 (EEKKAEEEVM) the composition is skewed to basic and acidic residues. A phosphoserine mark is found at Ser1680 and Ser1683. A Phosphothreonine modification is found at Thr1780. Ser1784 bears the Phosphoserine mark. The segment at 1812–1836 (ASEAVSEIQGPCSENHSPAEDPGLS) is disordered. A Phosphoserine modification is found at Ser1842. The interval 1882 to 2419 (DAFVAADSEK…RWRSPAHENS (538 aa)) is interaction with condensed chromosomes in telophase. Disordered stretches follow at residues 1890–1914 (EKST…ECEA) and 1929–1983 (FNSG…AQMS). Residues Ser1931, Ser2094, Ser2109, Ser2121, Ser2125, Ser2144, Ser2153, Ser2208, Ser2287, Ser2341, Ser2413, and Ser2419 each carry the phosphoserine modification. Positions 2119–2394 (VWSPLASPST…TGSQLFEMHE (276 aa)) are interaction with ERCC6. Residues 2182-2212 (SPIIKSVKTSPTSHSKHNTTSAKGFLSPGSQ) are disordered. Positions 2189–2212 (KTSPTSHSKHNTTSAKGFLSPGSQ) are enriched in polar residues.

The protein belongs to the RIF1 family. Interacts with TP53BP1 (when phosphorylated by ATM). May interact with TRF2. Interacts with SHLD2. Interacts with ERCC6 (via WHD region). Interacts with ASTE1. In terms of tissue distribution, expressed in Sertoli cells, prospermatagonia, early primary spermatocytes, and in oocytes at all stages of their growth. Expressed in embryonic stem (ES) and embryonic germ (EG) cells: expression is lost upon differentiation.

The protein localises to the nucleus. It localises to the chromosome. It is found in the telomere. The protein resides in the cytoplasm. Its subcellular location is the cytoskeleton. The protein localises to the spindle. Its function is as follows. Key regulator of TP53BP1 that plays a key role in the repair of double-strand DNA breaks (DSBs) in response to DNA damage: acts by promoting non-homologous end joining (NHEJ)-mediated repair of DSBs. In response to DNA damage, interacts with ATM-phosphorylated TP53BP1. Interaction with TP53BP1 leads to dissociate the interaction between NUDT16L1/TIRR and TP53BP1, thereby unmasking the tandem Tudor-like domain of TP53BP1 and allowing recruitment to DNA DSBs. Once recruited to DSBs, RIF1 and TP53BP1 act by promoting NHEJ-mediated repair of DSBs. In the same time, RIF1 and TP53BP1 specifically counteract the function of BRCA1 by blocking DSBs resection via homologous recombination (HR) during G1 phase. Also required for immunoglobulin class-switch recombination (CSR) during antibody genesis, a process that involves the generation of DNA DSBs. Promotes NHEJ of dysfunctional telomeres. In Mus musculus (Mouse), this protein is Telomere-associated protein RIF1.